The primary structure comprises 644 residues: Exoribonuclease 2 (644 aa).

The region spanning 189-516 is the RNB domain; the sequence is REDLTALDFV…NHRLLKAVIK (328 aa). An S1 motif domain is found at 561–643; it reads DTRFAAEIVD…ETRSIIARPV (83 aa).

Belongs to the RNR ribonuclease family. RNase II subfamily.

It is found in the cytoplasm. The catalysed reaction is Exonucleolytic cleavage in the 3'- to 5'-direction to yield nucleoside 5'-phosphates.. In terms of biological role, involved in mRNA degradation. Hydrolyzes single-stranded polyribonucleotides processively in the 3' to 5' direction. The chain is Exoribonuclease 2 from Escherichia coli (strain UTI89 / UPEC).